The sequence spans 190 residues: Xanthine phosphoribosyltransferase (190 aa).

Xanthine-binding residues include Leu-20 and Asn-27. Residue 128–132 (ANGKA) participates in 5-phospho-alpha-D-ribose 1-diphosphate binding. Lys-156 provides a ligand contact to xanthine.

This sequence belongs to the purine/pyrimidine phosphoribosyltransferase family. Xpt subfamily. Homodimer.

The protein localises to the cytoplasm. The catalysed reaction is XMP + diphosphate = xanthine + 5-phospho-alpha-D-ribose 1-diphosphate. The protein operates within purine metabolism; XMP biosynthesis via salvage pathway; XMP from xanthine: step 1/1. In terms of biological role, converts the preformed base xanthine, a product of nucleic acid breakdown, to xanthosine 5'-monophosphate (XMP), so it can be reused for RNA or DNA synthesis. The protein is Xanthine phosphoribosyltransferase of Finegoldia magna (strain ATCC 29328 / DSM 20472 / WAL 2508) (Peptostreptococcus magnus).